We begin with the raw amino-acid sequence, 178 residues long: Crossover junction endodeoxyribonuclease RuvC (178 aa).

Active-site residues include aspartate 7, glutamate 68, and aspartate 141. Mg(2+) contacts are provided by aspartate 7, glutamate 68, and aspartate 141.

Belongs to the RuvC family. As to quaternary structure, homodimer which binds Holliday junction (HJ) DNA. The HJ becomes 2-fold symmetrical on binding to RuvC with unstacked arms; it has a different conformation from HJ DNA in complex with RuvA. In the full resolvosome a probable DNA-RuvA(4)-RuvB(12)-RuvC(2) complex forms which resolves the HJ. Requires Mg(2+) as cofactor.

It localises to the cytoplasm. It catalyses the reaction Endonucleolytic cleavage at a junction such as a reciprocal single-stranded crossover between two homologous DNA duplexes (Holliday junction).. In terms of biological role, the RuvA-RuvB-RuvC complex processes Holliday junction (HJ) DNA during genetic recombination and DNA repair. Endonuclease that resolves HJ intermediates. Cleaves cruciform DNA by making single-stranded nicks across the HJ at symmetrical positions within the homologous arms, yielding a 5'-phosphate and a 3'-hydroxyl group; requires a central core of homology in the junction. The consensus cleavage sequence is 5'-(A/T)TT(C/G)-3'. Cleavage occurs on the 3'-side of the TT dinucleotide at the point of strand exchange. HJ branch migration catalyzed by RuvA-RuvB allows RuvC to scan DNA until it finds its consensus sequence, where it cleaves and resolves the cruciform DNA. In Parafrankia sp. (strain EAN1pec), this protein is Crossover junction endodeoxyribonuclease RuvC.